A 421-amino-acid polypeptide reads, in one-letter code: NADP(+)-dependent glutamate dehydrogenase (421 aa).

2 residues coordinate substrate: Lys70 and Lys94. The active-site Proton donor is Lys106. Residues Thr190 and Asn221 each coordinate NADP(+). Ser354 is a substrate binding site.

Belongs to the Glu/Leu/Phe/Val dehydrogenases family. Homohexamer.

The catalysed reaction is L-glutamate + NADP(+) + H2O = 2-oxoglutarate + NH4(+) + NADPH + H(+). Its activity is regulated as follows. Is not regulated allosterically. Activity is inhibited in the presence of high ionic strength; the inhibitory effect of KCl is slightly higher than that of NaCl. Functionally, catalyzes the reversible oxidative deamination of L-glutamate to 2-oxoglutarate and ammonia, thereby playing a key role at the intersection of the carbon and nitrogen metabolic pathways. Shows a high preference for NADP(+)/NADPH as the acceptor/donor over NAD(+)/NADH. May function in vivo in the synthetic direction. Also catalyzes at very low rates the oxidative deamination of L-2-aminobutyrate, and the reductive amination of 2-oxovalerate and 2-oxobutyrate. In Pyrobaculum calidifontis (strain DSM 21063 / JCM 11548 / VA1), this protein is NADP(+)-dependent glutamate dehydrogenase.